The sequence spans 58 residues: Keratin-associated protein 19-6 (58 aa).

Belongs to the KRTAP type 19 family. In terms of assembly, interacts with hair keratins.

In terms of biological role, in the hair cortex, hair keratin intermediate filaments are embedded in an interfilamentous matrix, consisting of hair keratin-associated proteins (KRTAP), which are essential for the formation of a rigid and resistant hair shaft through their extensive disulfide bond cross-linking with abundant cysteine residues of hair keratins. The matrix proteins include the high-sulfur and high-glycine-tyrosine keratins. This Homo sapiens (Human) protein is Keratin-associated protein 19-6 (KRTAP19-6).